Consider the following 219-residue polypeptide: Lipid transferase CIDEB (219 aa).

The CIDE-N domain occupies 34-110 (PQRPFRVCDH…VLQSGQSWSP (77 aa)).

The protein belongs to the CIDE family. In terms of assembly, interacts with DFFA. Interacts with DFFB; inhibited by DFFB. Interacts with APOB. Interacts with PREB/SEC12; facilitating loading of SCAP-SREBP into COPII vesicles. (Microbial infection) Interacts (via N-terminus) with HCV non-structural protein 5A (via N-terminus); this interaction seems to regulate the association of HCV particles with ApoE. Highly expressed in liver and small intestine and, at lower levels, in colon, kidney and spleen.

The protein resides in the lipid droplet. It is found in the endoplasmic reticulum membrane. Its subcellular location is the golgi apparatus. The protein localises to the cytoplasmic vesicle. It localises to the COPI-coated vesicle. Lipid transferase specifically expressed in hepatocytes, which promotes unilocular lipid droplet formation by mediating lipid droplet fusion. Lipid droplet fusion promotes their enlargement, restricting lipolysis and favoring lipid storage. Localizes on the lipid droplet surface, at focal contact sites between lipid droplets, and mediates atypical lipid droplet fusion by promoting directional net neutral lipid transfer from the smaller to larger lipid droplets. The transfer direction may be driven by the internal pressure difference between the contacting lipid droplet pair. Promotes lipid exchange and lipid droplet fusion in both small and large lipid droplet-containing hepatocytes. In addition to its role in lipid droplet fusion, also involved in cytoplasmic vesicle biogenesis and transport. Required for very-low-density lipoprotein (VLDL) lipidation and maturation. Probably involved in the biogenesis of VLDL transport vesicles by forming a COPII vesicle coat and facilitating the formation of endoplasmic reticulum-derived large vesicles. Also involved in sterol-regulated export of the SCAP-SREBP complex, composed of SCAP, SREBF1/SREBP1 and SREBF2/SREBP2, by promoting loading of SCAP-SREBP into COPII vesicles. May also activate apoptosis. Functionally, (Microbial infection) Involved in Hepatatis C virus (HCV) assembly and required for HCV entry into hepatocytes. In Homo sapiens (Human), this protein is Lipid transferase CIDEB.